An 85-amino-acid chain; its full sequence is U4-theraphotoxin-Hhn1a (85 aa).

An N-terminal signal peptide occupies residues 1-22 (MKVTLIAILTCAAALVLHTTAA). Residues 23–48 (EELEAESQLMEVGMPDTELAAVDEER) constitute a propeptide that is removed on maturation. 3 disulfides stabilise this stretch: C52–C66, C56–C77, and C71–C82.

This sequence belongs to the neurotoxin 12 (Hwtx-2) family. 02 (Hwtx-2) subfamily. As to quaternary structure, monomer. Expressed by the venom gland.

The protein localises to the secreted. Its function is as follows. Neurotoxin active on both insects and mammals. This chain is U4-theraphotoxin-Hhn1a, found in Cyriopagopus hainanus (Chinese bird spider).